The following is a 54-amino-acid chain: Large ribosomal subunit protein bL32c (54 aa).

The protein belongs to the bacterial ribosomal protein bL32 family.

The protein resides in the plastid. Its subcellular location is the chloroplast. This is Large ribosomal subunit protein bL32c from Cucumis sativus (Cucumber).